The sequence spans 38 residues: A2-specific pheromone (38 aa).

C35 bears the Cysteine methyl ester mark. C35 carries S-farnesyl cysteine lipidation. A propeptide spans 36 to 38 (LIA) (removed in mature form).

It is found in the cell membrane. Functionally, mating pheromone for A2 allele. In Mycosarcoma maydis (Corn smut fungus), this protein is A2-specific pheromone (MFA2).